The chain runs to 120 residues: Large ribosomal subunit protein bL20 (120 aa).

This sequence belongs to the bacterial ribosomal protein bL20 family.

Binds directly to 23S ribosomal RNA and is necessary for the in vitro assembly process of the 50S ribosomal subunit. It is not involved in the protein synthesizing functions of that subunit. In Blochmanniella pennsylvanica (strain BPEN), this protein is Large ribosomal subunit protein bL20.